Reading from the N-terminus, the 1054-residue chain is Proteoglycan 4 (1054 aa).

An N-terminal signal peptide occupies residues Met1–Ser24. 2 SMB domains span residues Asp26–Ser69 and Pro66–His108. 14 disulfide bridges follow: Cys30–Cys34, Cys30–Cys46, Cys34–Cys64, Cys44–Cys46, Cys44–Cys57, Cys50–Cys56, Cys57–Cys64, Cys70–Cys74, Cys70–Cys86, Cys74–Cys104, Cys84–Cys86, Cys84–Cys97, Cys90–Cys96, and Cys97–Cys104. Asn109 carries N-linked (GlcNAc...) asparagine glycosylation. The span at Ser110–Ser125 shows a compositional bias: low complexity. Residues Ser110 to Phe764 are disordered. Ser135 carries O-linked (GalNAc...) serine glycosylation. The span at Gln162–Ile175 shows a compositional bias: low complexity. Residues Glu188–Lys200 show a composition bias toward basic and acidic residues. Over residues Thr229–Thr238 the composition is skewed to pro residues. Thr237 and Thr250 each carry an O-linked (GalNAc...) threonine glycan. Over residues Thr286–Ala295 the composition is skewed to low complexity. Thr301 carries O-linked (GalNAc...) threonine glycosylation. Residue Ser302 is glycosylated (O-linked (GalNAc...) serine). A compositionally biased stretch (basic and acidic residues) spans Ser302–Glu318. O-linked (GalNAc...) threonine glycosylation is present at Thr306. A glycan (O-linked (GalNAc...) serine) is linked at Ser313. A 1; approximate repeat occupies Val317–Pro324. The interval Val317–Thr618 is 37 X 8 AA repeats of K-X-P-X-P-T-T-X. Over residues Pro319 to Ala328 the composition is skewed to polar residues. Residues Lys325 to Thr332 form a 2; approximate repeat. Ser327 carries an O-linked (GalNAc...) serine glycan. Low complexity predominate over residues Pro329–Thr339. O-linked (GalNAc...) threonine glycans are attached at residues Thr330, Thr338, Thr354, Thr362, Thr369, Thr377, Thr378, Thr385, Thr386, Thr393, and Thr394. The stretch at Lys333–Lys340 is one 3; approximate repeat. One copy of the 4; approximate repeat lies at Gln349–Ala356. Copy 5 of the repeat occupies Lys357–Lys364. Over residues Lys364–Glu399 the composition is skewed to basic and acidic residues. The stretch at Lys365–Arg371 is one 6; approximate repeat. 5 tandem repeats follow at residues Lys372–Pro379, Lys380–Pro387, Lys388–Pro395, Lys396–Pro403, and Lys404–Lys411. The span at Pro400–Pro426 shows a compositional bias: pro residues. A 12; approximate repeat occupies Lys412 to Pro418. O-linked (GalNAc...) threonine glycans are attached at residues Thr416, Thr417, Thr424, Thr432, Thr433, Thr440, Thr441, and Thr448. Tandem repeats lie at residues Lys419–Pro426, Lys427–Thr434, and Lys435–Thr442. Basic and acidic residues predominate over residues Lys427–Glu550. The 16; approximate repeat unit spans residues Lys443–Arg450. 21 repeat units span residues Lys451–Pro458, Lys459–Pro466, Lys467–Leu474, Lys475–Pro482, Lys483–Pro490, Lys491–Pro498, Lys499–Pro506, Lys507–Pro514, Lys515–Pro522, Lys523–Pro530, Lys531–Pro538, Lys539–Pro546, Lys547–Pro554, Lys555–Pro562, Lys563–Pro570, Lys571–Pro578, Lys579–Arg586, Lys587–Pro594, Lys595–Pro602, Lys603–Pro610, and Lys611–Thr618. 14 O-linked (GalNAc...) threonine glycosylation sites follow: Thr472, Thr480, Thr481, Thr488, Thr489, Thr496, Thr497, Thr504, Thr505, Thr512, Thr520, Thr521, Thr528, and Thr529. Residues Pro551–Pro562 show a composition bias toward pro residues. O-linked (GalNAc...) threonine glycosylation is found at Thr553, Thr560, Thr561, Thr568, Thr569, Thr576, and Thr577. Over residues Lys563–Glu614 the composition is skewed to basic and acidic residues. 3 O-linked (GalNAc...) threonine glycosylation sites follow: Thr592, Thr600, and Thr601. The span at Pro615–Thr624 shows a compositional bias: low complexity. Residues Thr622, Thr624, Thr628, Thr629, and Thr692 are each glycosylated (O-linked (GalNAc...) threonine). Positions Lys672–Lys699 are enriched in basic residues. Over residues Thr700 to Pro712 the composition is skewed to low complexity. Positions Glu713–Pro735 are enriched in polar residues. A disulfide bridge links Cys795 with Cys1053. Hemopexin repeat units lie at residues Gly797–Ile840 and Pro841–Leu888. An N-linked (GlcNAc...) asparagine glycan is attached at Asn808. Thr810 carries O-linked (GalNAc...) threonine glycosylation. The N-linked (GlcNAc...) asparagine glycan is linked to Asn938.

Homodimer; disulfide-linked. Post-translationally, N-glycosylated. O-glycosylated; contains glycosaminoglycan chondroitin sulfate and keratan sulfate. O-glycosylated with sialylated oligosaccharides which are predominantly represented by the monosialylated core type I structure, NeuNAcalpha2-3Galbeta1-3GalNAc, with smaller amounts of disialylated O-glycans. In terms of processing, the disulfide bond between Cys-795 and Cys-1053 is essential for protein cleavage. Post-translationally, proteolytically cleaved by cathepsin CTSG. As to expression, highly expressed in cartilage, bone and liver and weakly expressed in heart, brain and muscle. Expressed in the surface chondrocytes and in synovial intimal cells. Isoform B is expressed in bone, small intestine, muscle, testis, heart, liver and lung. Isoform C and isoform D are widely expressed.

It localises to the secreted. Plays a role in boundary lubrication within articulating joints. Prevents protein deposition onto cartilage from synovial fluid by controlling adhesion-dependent synovial growth and inhibiting the adhesion of synovial cells to the cartilage surface. The polypeptide is Proteoglycan 4 (Prg4) (Mus musculus (Mouse)).